Consider the following 463-residue polypeptide: T-box transcription factor TBX1-A (463 aa).

Disordered regions lie at residues 39 to 58 (SPSPGDPYSQHEPHYEPCSA) and 75 to 104 (GASSSSCASSTPGSGSTGSSSSNKAPVKKN). Residues 75–96 (GASSSSCASSTPGSGSTGSSSS) show a composition bias toward low complexity. The segment at residues 119 to 297 (LWDEFNQLGT…SNPFAKGFRD (179 aa)) is a DNA-binding region (T-box). Disordered regions lie at residues 320 to 354 (RSRNPVSSPTQNGSDKDGDGRREYERDASGTPLHG) and 377 to 409 (VPLSTGRPSPPHELRLDPHSQGSEPLHHHPYKY). Over residues 323–332 (NPVSSPTQNG) the composition is skewed to polar residues. Over residues 333-347 (SDKDGDGRREYERDA) the composition is skewed to basic and acidic residues. Residues 420–431 (KTRPAPYPLPTI) carry the Nuclear localization signal motif.

Binds DNA as a dimer. Interacts with dscr6/ripply3.

The protein localises to the nucleus. Functionally, probable transcriptional regulator involved in developmental processes. Binds to the palindromic T site 5'-TTCACACCTAGGTGTGAA-3' DNA sequence. Induces pre-placodal ectoderm (PPE) gene expression in regions where RIPPLY3 is absent. Plays a role in the formation of the anteroposterior (AP) axis during embryonic development; required to establish the posterolateral border of the pre-placodal ectoderm (PPE) acting downstream of the retinoic acid receptor (RAR) signaling. This is T-box transcription factor TBX1-A (tbx1-a) from Xenopus laevis (African clawed frog).